The sequence spans 114 residues: Small ribosomal subunit protein bS6 (114 aa).

Belongs to the bacterial ribosomal protein bS6 family.

Functionally, binds together with bS18 to 16S ribosomal RNA. This chain is Small ribosomal subunit protein bS6, found in Protochlamydia amoebophila (strain UWE25).